The primary structure comprises 277 residues: Thymidylate synthase (277 aa).

R27 contributes to the dUMP binding site. H57 serves as a coordination point for (6R)-5,10-methylene-5,6,7,8-tetrahydrofolate. 132–133 (RR) provides a ligand contact to dUMP. The active-site Nucleophile is the C152. DUMP-binding positions include 179–182 (RSAD), N190, and 220–222 (HIY). A (6R)-5,10-methylene-5,6,7,8-tetrahydrofolate-binding site is contributed by D182. Position 276 (A276) interacts with (6R)-5,10-methylene-5,6,7,8-tetrahydrofolate.

The protein belongs to the thymidylate synthase family. Bacterial-type ThyA subfamily. In terms of assembly, homodimer.

The protein localises to the cytoplasm. The catalysed reaction is dUMP + (6R)-5,10-methylene-5,6,7,8-tetrahydrofolate = 7,8-dihydrofolate + dTMP. Its pathway is pyrimidine metabolism; dTTP biosynthesis. Catalyzes the reductive methylation of 2'-deoxyuridine-5'-monophosphate (dUMP) to 2'-deoxythymidine-5'-monophosphate (dTMP) while utilizing 5,10-methylenetetrahydrofolate (mTHF) as the methyl donor and reductant in the reaction, yielding dihydrofolate (DHF) as a by-product. This enzymatic reaction provides an intracellular de novo source of dTMP, an essential precursor for DNA biosynthesis. This chain is Thymidylate synthase, found in Acidovorax sp. (strain JS42).